We begin with the raw amino-acid sequence, 431 residues long: Phosphate regulon sensor protein PhoR (431 aa).

At 1–9 (MLERLSWKR) the chain is on the cytoplasmic side. A helical transmembrane segment spans residues 10 to 28 (LVLELLLCCLPAFILGAFF). The Periplasmic portion of the chain corresponds to 29–32 (GYLP). Residues 33-51 (WFLLASVTGLLIWHFWNLL) traverse the membrane as a helical segment. Topologically, residues 52-431 (RLSWWLWVDR…PERLIAKNSD (380 aa)) are cytoplasmic. The region spanning 96-172 (LIKRFRSGAE…RPLNLVLNTG (77 aa)) is the PAS domain. Residues 210–425 (NVSHELRTPL…RFSFVIPERL (216 aa)) form the Histidine kinase domain. The residue at position 213 (H213) is a Phosphohistidine; by autocatalysis.

Its subcellular location is the cell inner membrane. It catalyses the reaction ATP + protein L-histidine = ADP + protein N-phospho-L-histidine.. Its function is as follows. Member of the two-component regulatory system PhoR/PhoB involved in the phosphate regulon genes expression. PhoR may function as a membrane-associated protein kinase that phosphorylates PhoB in response to environmental signals. This chain is Phosphate regulon sensor protein PhoR (phoR), found in Escherichia coli (strain K12).